Here is a 621-residue protein sequence, read N- to C-terminus: Probable serine/threonine-protein kinase WNK2 (621 aa).

In terms of domain architecture, Protein kinase spans 28-286; that stretch reads GRYTEVLGKG…AQELLMDPFL (259 aa). ATP is bound by residues 108–111 and lysine 158; that span reads TEVF. The active-site Proton acceptor is aspartate 175. Disordered regions lie at residues 438–490, 501–520, 527–553, and 600–621; these read SVEN…SDSP, VEPH…NDTD, GTSV…SPQS, and HREE…SDKP.

The protein belongs to the protein kinase superfamily. Ser/Thr protein kinase family. WNK subfamily.

It catalyses the reaction L-seryl-[protein] + ATP = O-phospho-L-seryl-[protein] + ADP + H(+). It carries out the reaction L-threonyl-[protein] + ATP = O-phospho-L-threonyl-[protein] + ADP + H(+). This is Probable serine/threonine-protein kinase WNK2 (WNK2) from Oryza sativa subsp. japonica (Rice).